The sequence spans 44 residues: Cuticle protein CP466 (44 aa).

2 repeat units span residues 3–20 (LLEGPSGVLFKDGQKKYL) and 27–44 (VLLTESGAVLSNGDNVQF).

In terms of tissue distribution, calcified shell.

This chain is Cuticle protein CP466, found in Cancer pagurus (Rock crab).